The sequence spans 97 residues: uncharacterized protein (97 aa).

It to B.licheniformis xpaL1 and to B.subtilis XhlA.

This is an uncharacterized protein from Bacillus licheniformis.